A 291-amino-acid chain; its full sequence is Acetylglutamate kinase (291 aa).

Substrate is bound by residues 64 to 65, Arg-86, and Asn-190; that span reads GG.

Belongs to the acetylglutamate kinase family. ArgB subfamily.

It is found in the cytoplasm. It catalyses the reaction N-acetyl-L-glutamate + ATP = N-acetyl-L-glutamyl 5-phosphate + ADP. It participates in amino-acid biosynthesis; L-arginine biosynthesis; N(2)-acetyl-L-ornithine from L-glutamate: step 2/4. Functionally, catalyzes the ATP-dependent phosphorylation of N-acetyl-L-glutamate. This chain is Acetylglutamate kinase, found in Leptospira borgpetersenii serovar Hardjo-bovis (strain JB197).